The following is a 126-amino-acid chain: Hydrogenase maturation factor HypA (126 aa).

His2 contacts Ni(2+). Residues Cys78, Cys81, Cys97, and Cys100 each contribute to the Zn(2+) site.

The protein belongs to the HypA/HybF family.

Functionally, involved in the maturation of [NiFe] hydrogenases. Required for nickel insertion into the metal center of the hydrogenase. This Methanococcus maripaludis (strain C5 / ATCC BAA-1333) protein is Hydrogenase maturation factor HypA.